The chain runs to 99 residues: Protein E7 (99 aa).

The interval 1 to 41 (MHGEITTLQDYVLDLEPEATDLYCYEQLCDSSEEEEDTIDG) is E7 terminal domain. The LXCXE motif; interaction with host RB1 and TMEM173/STING signature appears at 22–26 (LYCYE). A zinc finger lies at 59 to 95 (CCKCEATLRLCVQSTHIDIRKLEDLLMGTFGIVCPGC). A Nuclear export signal motif is present at residues 77-85 (IRKLEDLLM).

Belongs to the papillomaviridae E7 protein family. In terms of assembly, homodimer. Homooligomer. Interacts with host RB1; this interaction induces dissociation of RB1-E2F1 complex thereby disrupting RB1 activity. Interacts with host EP300; this interaction represses EP300 transcriptional activity. Interacts with protein E2; this interaction inhibits E7 oncogenic activity. Interacts with host TMEM173/STING; this interaction impairs the ability of TMEM173/STING to sense cytosolic DNA and promote the production of type I interferon (IFN-alpha and IFN-beta). In terms of processing, highly phosphorylated.

The protein localises to the host cytoplasm. It is found in the host nucleus. In terms of biological role, plays a role in viral genome replication by driving entry of quiescent cells into the cell cycle. Stimulation of progression from G1 to S phase allows the virus to efficiently use the cellular DNA replicating machinery to achieve viral genome replication. E7 protein has both transforming and trans-activating activities. Induces the disassembly of the E2F1 transcription factor from RB1, with subsequent transcriptional activation of E2F1-regulated S-phase genes. Interferes with host histone deacetylation mediated by HDAC1 and HDAC2, leading to transcription activation. Also plays a role in the inhibition of both antiviral and antiproliferative functions of host interferon alpha. Interaction with host TMEM173/STING impairs the ability of TMEM173/STING to sense cytosolic DNA and promote the production of type I interferon (IFN-alpha and IFN-beta). The polypeptide is Protein E7 (Human papillomavirus 35).